Reading from the N-terminus, the 295-residue chain is Iron-sulfur cluster carrier protein (295 aa).

38-45 (GKGGVGKS) contacts ATP.

The protein belongs to the Mrp/NBP35 ATP-binding proteins family. As to quaternary structure, homodimer.

In terms of biological role, binds and transfers iron-sulfur (Fe-S) clusters to target apoproteins. Can hydrolyze ATP. The chain is Iron-sulfur cluster carrier protein from Pyrococcus abyssi (strain GE5 / Orsay).